Here is a 412-residue protein sequence, read N- to C-terminus: CinA-like protein (412 aa).

The protein belongs to the CinA family.

This Salinibacter ruber (strain DSM 13855 / M31) protein is CinA-like protein.